The following is a 116-amino-acid chain: Iron-sulfur cluster insertion protein ErpA (116 aa).

Residues Cys44, Cys108, and Cys110 each coordinate iron-sulfur cluster.

The protein belongs to the HesB/IscA family. As to quaternary structure, homodimer. It depends on iron-sulfur cluster as a cofactor.

Functionally, required for insertion of 4Fe-4S clusters for at least IspG. The sequence is that of Iron-sulfur cluster insertion protein ErpA from Shewanella oneidensis (strain ATCC 700550 / JCM 31522 / CIP 106686 / LMG 19005 / NCIMB 14063 / MR-1).